A 635-amino-acid chain; its full sequence is Glutamine--fructose-6-phosphate aminotransferase [isomerizing] (635 aa).

The Nucleophile; for GATase activity role is filled by C2. The 217-residue stretch at 2–218 (CGIVGMVAGR…EGDIADVHRD (217 aa)) folds into the Glutamine amidotransferase type-2 domain. SIS domains lie at 299–439 (FERL…AKKI) and 472–625 (CARH…IDQP). The active-site For Fru-6P isomerization activity is K630.

Homodimer.

It localises to the cytoplasm. The catalysed reaction is D-fructose 6-phosphate + L-glutamine = D-glucosamine 6-phosphate + L-glutamate. Its function is as follows. Catalyzes the first step in hexosamine metabolism, converting fructose-6P into glucosamine-6P using glutamine as a nitrogen source. The protein is Glutamine--fructose-6-phosphate aminotransferase [isomerizing] of Treponema pallidum (strain Nichols).